The following is a 255-amino-acid chain: Small ribosomal subunit protein uS2 (255 aa).

The segment at 230 to 255 is disordered; that stretch reads QGSSGRDLGASSEVPVEPALEEAAEG.

The protein belongs to the universal ribosomal protein uS2 family.

The polypeptide is Small ribosomal subunit protein uS2 (Rhizobium johnstonii (strain DSM 114642 / LMG 32736 / 3841) (Rhizobium leguminosarum bv. viciae)).